Here is a 485-residue protein sequence, read N- to C-terminus: D-alanine--D-alanyl carrier protein ligase (485 aa).

144-145 (TS) serves as a coordination point for ATP. Asp189 contacts D-alanine. ATP is bound at residue 284–289 (NTYGPT). Val293 is a binding site for D-alanine. 2 residues coordinate ATP: Asp365 and Lys473. D-alanine is bound at residue Lys473.

Belongs to the ATP-dependent AMP-binding enzyme family. DltA subfamily.

The protein resides in the cytoplasm. It catalyses the reaction holo-[D-alanyl-carrier protein] + D-alanine + ATP = D-alanyl-[D-alanyl-carrier protein] + AMP + diphosphate. The protein operates within cell wall biogenesis; lipoteichoic acid biosynthesis. Functionally, catalyzes the first step in the D-alanylation of lipoteichoic acid (LTA), the activation of D-alanine and its transfer onto the D-alanyl carrier protein (Dcp) DltC. In an ATP-dependent two-step reaction, forms a high energy D-alanyl-AMP intermediate, followed by transfer of the D-alanyl residue as a thiol ester to the phosphopantheinyl prosthetic group of the Dcp. D-alanylation of LTA plays an important role in modulating the properties of the cell wall in Gram-positive bacteria, influencing the net charge of the cell wall. The chain is D-alanine--D-alanyl carrier protein ligase from Staphylococcus aureus (strain USA300).